The primary structure comprises 540 residues: Pentatricopeptide repeat-containing protein At1g80880, mitochondrial (540 aa).

The N-terminal 87 residues, 1 to 87 (MAAIVAIGRK…ETFDINLTAL (87 aa)), are a transit peptide targeting the mitochondrion. PPR repeat units follow at residues 154–184 (DQKS…MFNV), 188–222 (TRKA…KHTP), 223–253 (YDEA…SKKL), 257–292 (DVEG…CITP), 293–327 (NKDS…GLAP), 328–362 (GIEV…GLKP), 363–397 (DSVT…NLSP), 402–428 (FHAF…DLGP), 429–463 (TEET…EIVA), and 464–498 (NPAL…GFVG). The disordered stretch occupies residues 514–540 (VRKSKRMNLQKVGSQEGYKGQRSVDRK).

This sequence belongs to the PPR family. P subfamily.

The protein resides in the mitochondrion. This chain is Pentatricopeptide repeat-containing protein At1g80880, mitochondrial, found in Arabidopsis thaliana (Mouse-ear cress).